Reading from the N-terminus, the 348-residue chain is 4-hydroxy-2-oxovalerate aldolase 1 (348 aa).

In terms of domain architecture, Pyruvate carboxyltransferase spans 8-260; it reads ITVHDMTLRD…QTGVDVWAIQ (253 aa). Residue 16-17 coordinates substrate; the sequence is RD. Asp17 is a Mn(2+) binding site. The Proton acceptor role is filled by His20. Substrate-binding residues include Ser170 and His199. Mn(2+) contacts are provided by His199 and His201. Tyr290 is a substrate binding site.

The protein belongs to the 4-hydroxy-2-oxovalerate aldolase family.

It carries out the reaction (S)-4-hydroxy-2-oxopentanoate = acetaldehyde + pyruvate. The sequence is that of 4-hydroxy-2-oxovalerate aldolase 1 from Cupriavidus metallidurans (strain ATCC 43123 / DSM 2839 / NBRC 102507 / CH34) (Ralstonia metallidurans).